The sequence spans 264 residues: tRNA (guanine-N(1)-)-methyltransferase (264 aa).

S-adenosyl-L-methionine is bound by residues G125 and 145 to 150 (LGDFVL).

The protein belongs to the RNA methyltransferase TrmD family. Homodimer.

It is found in the cytoplasm. It carries out the reaction guanosine(37) in tRNA + S-adenosyl-L-methionine = N(1)-methylguanosine(37) in tRNA + S-adenosyl-L-homocysteine + H(+). In terms of biological role, specifically methylates guanosine-37 in various tRNAs. The polypeptide is tRNA (guanine-N(1)-)-methyltransferase (Burkholderia mallei (strain NCTC 10247)).